The primary structure comprises 189 residues: Protein sisterless A (189 aa).

The segment at Asp-93–Arg-124 is disordered. Over residues Asp-108–Arg-121 the composition is skewed to basic and acidic residues.

In terms of assembly, homodimer. Interacts with dpn (via bHLH motif). Interacts with da (via bHLH motif). Interacts with Bap60. In terms of tissue distribution, localizes to all the embryonic nuclei until nuclear cycle 9, when expression ceases in the prepole cell nuclei. Associates with the somatic nuclei through cycle 10. By nuclear cycle 12, distributes uniformly in the somatic portion of the embryo and no longer associates with the nuclei. After early cycle 14 (beginning of cellularization) there is very little or no expression in the periphery of the embryo or in either the somatic or germ cells. In the yolk, accumulates at the nuclei from nuclear cycle 8 until 10-11 hours after fertilization.

The protein localises to the nucleus. Functionally, involved in sex determination and dosage compensation. Required for proper expression of Sxl in embryonic somatic cells. Also has an essential function in the yolk nuclei. Involved in endoderm migration and midgut formation. The sequence is that of Protein sisterless A (sisA) from Drosophila melanogaster (Fruit fly).